A 239-amino-acid polypeptide reads, in one-letter code: MLPEHQELLGRLTRQRLNIELSGDQIEKFSIYADRLVEWNEKVNLTSITEPEEIILKHFVDSLALLSLVQGKRLADIGTGAGFPGIPLKILLPEVEVYLVDSLAKRLDFLETVIKELKLTKVQTVHARAEDFARDPHYRETFDCVTSRAVARLPVLLEYAVPLLKKGGYFLAAKGSQAQEEVMESKKALTVLGAEIKDIKLFNLGAEAEHRAIILVEKTSSTPPAYPRKAGTPGKKPLV.

Residues Gly78, Phe83, 129-130, and Arg148 contribute to the S-adenosyl-L-methionine site; that span reads AE.

Belongs to the methyltransferase superfamily. RNA methyltransferase RsmG family.

It is found in the cytoplasm. Functionally, specifically methylates the N7 position of a guanine in 16S rRNA. The chain is Ribosomal RNA small subunit methyltransferase G from Desulfitobacterium hafniense (strain Y51).